A 318-amino-acid chain; its full sequence is Mitochondrial thiamine pyrophosphate carrier 1 (318 aa).

6 consecutive transmembrane segments (helical) span residues 12-28, 91-107, 125-141, 181-197, 221-237, and 284-301; these read GTRRQVVLAGGIAGLVS, LMYVCYGAIQFAAYRTT, SFVAGATAGGLATASTY, GCSAAVGQIVPYMGLFF, AAGVVASVLAKTGVFPL, and GLTVSLFKAAPASAVTMW. Solcar repeat units follow at residues 12–110, 120–206, and 214–309; these read GTRR…TTQA, PPPA…LRPV, and PFGS…SLHY.

The protein belongs to the mitochondrial carrier (TC 2.A.29) family.

It localises to the mitochondrion inner membrane. In terms of biological role, mitochondrial transporter that mediates uptake of thiamine pyrophosphate (ThPP) into mitochondria. This chain is Mitochondrial thiamine pyrophosphate carrier 1 (tpc1), found in Aspergillus oryzae (strain ATCC 42149 / RIB 40) (Yellow koji mold).